Here is a 920-residue protein sequence, read N- to C-terminus: Whirlin (920 aa).

The region spanning 141–224 (LVSLRRAKAH…LVLSVYSAGR (84 aa)) is the PDZ 1 domain. The disordered stretch occupies residues 241–262 (QGRSTSPPSSLPHGSTLRQHED). Residues 242 to 257 (GRSTSPPSSLPHGSTL) show a composition bias toward polar residues. The PDZ 2 domain occupies 278–360 (KVNLVLGDGR…LILTVKDVGR (83 aa)). 4 disordered regions span residues 502 to 536 (MKARQPPGPGVGDTYSMVSYSDTGSSTGSHGTSTT), 561 to 603 (CETT…QGHD), 630 to 730 (FSAP…AMGA), and 752 to 828 (RALP…PTST). The segment covering 520–536 (SYSDTGSSTGSHGTSTT) has biased composition (low complexity). The segment covering 561–570 (CETTQGSTNA) has biased composition (polar residues). Composition is skewed to pro residues over residues 589-598 (IKPPPPPPPL) and 636-651 (RSPPPPPGIAPTPTPG). Residues 655-674 (ARDSPSSPIYASISHANPSS) show a composition bias toward polar residues. Serine 698 carries the phosphoserine modification. 2 stretches are compositionally biased toward polar residues: residues 756-775 (QTRTASTLSQLSDSGQTLSE) and 785-800 (EASTSGRGRQTANTKN). Positions 802-813 (NGKELPQTERTT) are enriched in basic and acidic residues. The PDZ 3 domain occupies 829-912 (LIRVRKSAAT…TKERDYIDFL (84 aa)).

In terms of assembly, forms homooligomers. Interacts (via C-terminal PDZ domain) with MYO15A; this interaction is necessary for localization of WHRN to stereocilia tips. Interacts (via C-terminal PDZ domain) with MPP1/p55. Interacts with LRRC4C/NGL1. Interacts with MYO7A. Interacts with RPGR. Interacts with EPS8. Interacts with CASK. Interacts with CIB2. Component of USH2 complex, composed of ADGRV1, PDZD7, USH2A and WHRN. Interacts (via PDZ domains) with PDZD7; the interaction is direct. Interacts (via N-terminal PDZ domain) with USH2A (via cytoplasmic region). Interacts with ADGRV1/MASS1 (via cytoplasmic region). Ubiquitous. Highly expressed in heart, spleen, lung and liver. Highly expressed in brain, in the olfactory bulb, thalamus, layers III-V of the cerebral cortex and the molecular layer of cerebellum. Detected in soma and dendrites of thalamic neurons, and in cerebrum in cell bodies and apical dendrites of pyramidal neurons. Expressed in retina and inner ear.

It localises to the cytoplasm. It is found in the cell projection. The protein resides in the stereocilium. Its subcellular location is the growth cone. The protein localises to the synapse. Functionally, involved in hearing and vision as member of the USH2 complex. Necessary for elongation and maintenance of inner and outer hair cell stereocilia in the organ of Corti in the inner ear. Involved in the maintenance of the hair bundle ankle region, which connects stereocilia in cochlear hair cells of the inner ear. In retina photoreceptors, required for the maintenance of periciliary membrane complex that seems to play a role in regulating intracellular protein transport. This is Whirlin from Rattus norvegicus (Rat).